Reading from the N-terminus, the 468-residue chain is Acetyl-CoA decarbonylase/synthase complex subunit gamma 2 (468 aa).

The 60-residue stretch at Met-1–Glu-60 folds into the 4Fe-4S domain. Positions 18, 21, 26, and 43 each coordinate [4Fe-4S] cluster.

In terms of assembly, heterodimer of delta and gamma chains. The ACDS complex is made up of alpha, epsilon, beta, gamma and delta chains with a probable stoichiometry of (alpha(2)epsilon(2))(4)-beta(8)-(gamma(1)delta(1))(8). Requires corrinoid as cofactor. [4Fe-4S] cluster is required as a cofactor.

It catalyses the reaction 5,6,7,8-tetrahydrosarcinapterin + methyl-Co(III)-[corrinoid Fe-S protein] = 5-methyltetrahydrosarcinapterin + Co(I)-[corrinoid Fe-S protein] + H(+). It participates in one-carbon metabolism; methanogenesis from acetate. Functionally, part of a complex that catalyzes the reversible cleavage of acetyl-CoA, allowing growth on acetate as sole source of carbon and energy. The chain is Acetyl-CoA decarbonylase/synthase complex subunit gamma 2 from Methanosarcina thermophila.